The chain runs to 126 residues: Histone H2B type 1-L (126 aa).

Residues 1–12 (MPELAKSAPAPK) show a composition bias toward low complexity. The interval 1–36 (MPELAKSAPAPKKGSKKAVTKAQKKDGKKRKRSRKE) is disordered. The residue at position 2 (Pro-2) is an N-acetylproline. Glu-3 is subject to ADP-ribosyl glutamic acid. The residue at position 6 (Lys-6) is an N6-(2-hydroxyisobutyryl)lysine; alternate. At Lys-6 the chain carries N6-(beta-hydroxybutyryl)lysine; alternate. Position 6 is an N6-acetyllysine; alternate (Lys-6). Lys-6 carries the post-translational modification N6-butyryllysine; alternate. Residue Lys-6 is modified to N6-crotonyllysine; alternate. Residue Lys-6 is modified to N6-lactoyllysine; alternate. Lys-6 participates in a covalent cross-link: Glycyl lysine isopeptide (Lys-Gly) (interchain with G-Cter in SUMO2); alternate. ADP-ribosylserine is present on Ser-7. Lys-12 is subject to N6-(beta-hydroxybutyryl)lysine; alternate. 2 positions are modified to N6-acetyllysine; alternate: Lys-12 and Lys-13. N6-crotonyllysine; alternate occurs at positions 12 and 13. Lys-12 is modified (N6-lactoyllysine; alternate). At Lys-13 the chain carries N6-(2-hydroxyisobutyryl)lysine; alternate. Residue Ser-15 is modified to Phosphoserine; by STK4/MST1. N6-acetyllysine; alternate occurs at positions 16, 17, 21, and 24. N6-crotonyllysine; alternate is present on residues Lys-16, Lys-17, Lys-21, and Lys-24. Lys-16, Lys-17, Lys-21, and Lys-24 each carry N6-lactoyllysine; alternate. N6-(beta-hydroxybutyryl)lysine; alternate is present on residues Lys-17 and Lys-21. Lys-17 carries the post-translational modification N6-glutaryllysine; alternate. Lys-21 and Lys-24 each carry N6-(2-hydroxyisobutyryl)lysine; alternate. N6-butyryllysine; alternate is present on Lys-21. Lys-21 is covalently cross-linked (Glycyl lysine isopeptide (Lys-Gly) (interchain with G-Cter in SUMO2); alternate). Lys-25 is subject to N6-(2-hydroxyisobutyryl)lysine. An N6-(2-hydroxyisobutyryl)lysine; alternate modification is found at Lys-35. N6-(beta-hydroxybutyryl)lysine; alternate is present on Lys-35. N6-crotonyllysine; alternate is present on Lys-35. At Lys-35 the chain carries N6-glutaryllysine; alternate. Residue Lys-35 is modified to N6-succinyllysine; alternate. A Glycyl lysine isopeptide (Lys-Gly) (interchain with G-Cter in ubiquitin); alternate cross-link involves residue Lys-35. Glu-36 is subject to PolyADP-ribosyl glutamic acid. Ser-37 carries the phosphoserine; by AMPK modification. Residues Lys-44, Lys-47, and Lys-58 each carry the N6-(2-hydroxyisobutyryl)lysine; alternate modification. Lys-44 carries the N6-lactoyllysine; alternate modification. N6-glutaryllysine; alternate is present on residues Lys-44 and Lys-47. The residue at position 47 (Lys-47) is an N6-methyllysine; alternate. Residue Lys-58 is modified to N6,N6-dimethyllysine; alternate. A Dimethylated arginine modification is found at Arg-80. Position 86 is an N6-(2-hydroxyisobutyryl)lysine; alternate (Lys-86). Lys-86 is modified (N6-(beta-hydroxybutyryl)lysine; alternate). Lys-86 is subject to N6-acetyllysine; alternate. Position 86 is an N6-lactoyllysine; alternate (Lys-86). An N6,N6,N6-trimethyllysine; alternate modification is found at Lys-86. Omega-N-methylarginine is present on residues Arg-87 and Arg-93. Residue Lys-109 is modified to N6-(2-hydroxyisobutyryl)lysine; alternate. Position 109 is an N6-lactoyllysine; alternate (Lys-109). At Lys-109 the chain carries N6-glutaryllysine; alternate. Lys-109 is subject to N6-methyllysine; alternate. O-linked (GlcNAc) serine glycosylation occurs at Ser-113. Thr-116 is modified (phosphothreonine). Residues Lys-117 and Lys-121 each carry the N6-(2-hydroxyisobutyryl)lysine; alternate modification. Residues Lys-117 and Lys-121 each carry the N6-(beta-hydroxybutyryl)lysine; alternate modification. Residues Lys-117 and Lys-121 each carry the N6-lactoyllysine; alternate modification. N6-glutaryllysine; alternate is present on residues Lys-117 and Lys-121. N6-succinyllysine; alternate occurs at positions 117 and 121. The residue at position 117 (Lys-117) is an N6-malonyllysine; alternate. Lys-117 bears the N6-methylated lysine; alternate mark. Lys-121 participates in a covalent cross-link: Glycyl lysine isopeptide (Lys-Gly) (interchain with G-Cter in ubiquitin); alternate.

It belongs to the histone H2B family. The nucleosome is a histone octamer containing two molecules each of H2A, H2B, H3 and H4 assembled in one H3-H4 heterotetramer and two H2A-H2B heterodimers. The octamer wraps approximately 147 bp of DNA. In terms of processing, monoubiquitination at Lys-35 (H2BK34Ub) by the MSL1/MSL2 dimer is required for histone H3 'Lys-4' (H3K4me) and 'Lys-79' (H3K79me) methylation and transcription activation at specific gene loci, such as HOXA9 and MEIS1 loci. Similarly, monoubiquitination at Lys-121 (H2BK120Ub) by the RNF20/40 complex gives a specific tag for epigenetic transcriptional activation and is also prerequisite for histone H3 'Lys-4' and 'Lys-79' methylation. It also functions cooperatively with the FACT dimer to stimulate elongation by RNA polymerase II. H2BK120Ub also acts as a regulator of mRNA splicing: deubiquitination by USP49 is required for efficient cotranscriptional splicing of a large set of exons. Phosphorylation at Ser-37 (H2BS36ph) by AMPK in response to stress promotes transcription. Phosphorylated on Ser-15 (H2BS14ph) by STK4/MST1 during apoptosis; which facilitates apoptotic chromatin condensation. Also phosphorylated on Ser-15 in response to DNA double strand breaks (DSBs), and in correlation with somatic hypermutation and immunoglobulin class-switch recombination. Post-translationally, glcNAcylation at Ser-113 promotes monoubiquitination of Lys-121. It fluctuates in response to extracellular glucose, and associates with transcribed genes. In terms of processing, ADP-ribosylated by PARP1 or PARP2 on Ser-7 (H2BS6ADPr) in response to DNA damage. H2BS6ADPr promotes recruitment of CHD1L. Mono-ADP-ribosylated on Glu-3 (H2BE2ADPr) by PARP3 in response to single-strand breaks. Poly ADP-ribosylation on Glu-36 (H2BE35ADPr) by PARP1 regulates adipogenesis: it inhibits phosphorylation at Ser-37 (H2BS36ph), thereby blocking expression of pro-adipogenetic genes. Crotonylation (Kcr) is specifically present in male germ cells and marks testis-specific genes in post-meiotic cells, including X-linked genes that escape sex chromosome inactivation in haploid cells. Crotonylation marks active promoters and enhancers and confers resistance to transcriptional repressors. It is also associated with post-meiotically activated genes on autosomes. Post-translationally, lactylated in macrophages by EP300/P300 by using lactoyl-CoA directly derived from endogenous or exogenous lactate, leading to stimulates gene transcription.

It is found in the nucleus. Its subcellular location is the chromosome. Its function is as follows. Core component of nucleosome. Nucleosomes wrap and compact DNA into chromatin, limiting DNA accessibility to the cellular machineries which require DNA as a template. Histones thereby play a central role in transcription regulation, DNA repair, DNA replication and chromosomal stability. DNA accessibility is regulated via a complex set of post-translational modifications of histones, also called histone code, and nucleosome remodeling. The protein is Histone H2B type 1-L of Homo sapiens (Human).